The sequence spans 513 residues: Histidine ammonia-lyase (513 aa).

A cross-link (5-imidazolinone (Ala-Gly)) is located at residues 143-145; the sequence is ASG. Residue S144 is modified to 2,3-didehydroalanine (Ser).

It belongs to the PAL/histidase family. Post-translationally, contains an active site 4-methylidene-imidazol-5-one (MIO), which is formed autocatalytically by cyclization and dehydration of residues Ala-Ser-Gly.

It localises to the cytoplasm. It catalyses the reaction L-histidine = trans-urocanate + NH4(+). It functions in the pathway amino-acid degradation; L-histidine degradation into L-glutamate; N-formimidoyl-L-glutamate from L-histidine: step 1/3. This chain is Histidine ammonia-lyase, found in Paracoccus denitrificans (strain Pd 1222).